Here is a 71-residue protein sequence, read N- to C-terminus: Protein CYSTEINE-RICH TRANSMEMBRANE MODULE 8 (71 aa).

Polar residues predominate over residues 1-22 (MNQSAQNYFSVQKPSETSSGPY). The disordered stretch occupies residues 1 to 35 (MNQSAQNYFSVQKPSETSSGPYTSPPPIGYPTRDA). Residues 48–64 (NSKGVNPEGCCAAICCC) form a helical membrane-spanning segment.

It belongs to the CYSTM1 family. Mostly expressed in stems, siliques, roots and flowers and, to a lower extent, in leaves.

Its subcellular location is the membrane. The protein localises to the nucleus. In terms of biological role, involved in resistance to abiotic stress. The polypeptide is Protein CYSTEINE-RICH TRANSMEMBRANE MODULE 8 (Arabidopsis thaliana (Mouse-ear cress)).